Consider the following 381-residue polypeptide: uncharacterized protein (381 aa).

A run of 2 helical transmembrane segments spans residues 22-42 (GVLL…YLTA) and 246-266 (LIPE…LLVA).

The protein localises to the cell membrane. This is an uncharacterized protein from Mycobacterium tuberculosis (strain ATCC 25618 / H37Rv).